The primary structure comprises 151 residues: Transmembrane protein 239 (151 aa).

3 consecutive transmembrane segments (helical) span residues 61-81 (LWGL…HALF), 85-105 (SYLL…LLPA), and 116-138 (ALLF…GLLT).

Its subcellular location is the membrane. This is Transmembrane protein 239 (Tmem239) from Mus musculus (Mouse).